A 122-amino-acid polypeptide reads, in one-letter code: Immunoglobulin lambda variable 4-3 (122 aa).

Positions 1–19 are cleaved as a signal peptide; the sequence is MAWVSFYLLPFIFSTGLCA. The tract at residues 20–44 is framework-1; that stretch reads LPVLTQPPSASALLGASIKLTCTLS. In terms of domain architecture, Ig-like spans 21–122; that stretch reads PVLTQPPSAS…ESHTIDGQVG (102 aa). Cysteine 41 and cysteine 111 are joined by a disulfide. The complementarity-determining-1 stretch occupies residues 45 to 51; it reads SEHSTYT. A framework-2 region spans residues 52–68; sequence IEWYQQRPGRSPQYIMK. The tract at residues 69–75 is complementarity-determining-2; sequence VKSDGSH. Residues 76-111 are framework-3; sequence SKGDGIPDRFMGSSSGADRYLTFSNLQSDDEAEYHC. The interval 112 to 122 is complementarity-determining-3; the sequence is GESHTIDGQVG.

Immunoglobulins are composed of two identical heavy chains and two identical light chains; disulfide-linked.

It is found in the secreted. Its subcellular location is the cell membrane. In terms of biological role, v region of the variable domain of immunoglobulin light chains that participates in the antigen recognition. Immunoglobulins, also known as antibodies, are membrane-bound or secreted glycoproteins produced by B lymphocytes. In the recognition phase of humoral immunity, the membrane-bound immunoglobulins serve as receptors which, upon binding of a specific antigen, trigger the clonal expansion and differentiation of B lymphocytes into immunoglobulins-secreting plasma cells. Secreted immunoglobulins mediate the effector phase of humoral immunity, which results in the elimination of bound antigens. The antigen binding site is formed by the variable domain of one heavy chain, together with that of its associated light chain. Thus, each immunoglobulin has two antigen binding sites with remarkable affinity for a particular antigen. The variable domains are assembled by a process called V-(D)-J rearrangement and can then be subjected to somatic hypermutations which, after exposure to antigen and selection, allow affinity maturation for a particular antigen. In Homo sapiens (Human), this protein is Immunoglobulin lambda variable 4-3.